The sequence spans 84 residues: Putative membrane protein insertion efficiency factor (84 aa).

This sequence belongs to the UPF0161 family.

The protein localises to the cell inner membrane. Its function is as follows. Could be involved in insertion of integral membrane proteins into the membrane. In Shewanella denitrificans (strain OS217 / ATCC BAA-1090 / DSM 15013), this protein is Putative membrane protein insertion efficiency factor.